The sequence spans 134 residues: UPF0719 transmembrane protein YshE (134 aa).

The next 4 helical transmembrane spans lie at 10-30 (VEIAAYYSVAVLCLVLFLTVF), 48-68 (AVAMATGGKILGIANVFQHSI), 78-98 (IGWGVYGFVMLLISYFIFEFL), and 114-134 (AVGFISFVISVGLSFVVAAGI).

Belongs to the UPF0719 family.

It is found in the cell membrane. The chain is UPF0719 transmembrane protein YshE (yshE) from Bacillus subtilis (strain 168).